A 402-amino-acid chain; its full sequence is MMVHCAGCERPILDRFLLNVLDRAWHIKCVQCCECKTNLSEKCFSREGKLYCKNDFFRRFGTKCAGCAQGISPSDLVRKARSKVFHLNCFTCMVCNKQLSTGEELYVIDENKFVCKDDYLSSSSLKEGSLNSVSSCTDRSLSPDLQDALQDDPKETDNSTSSDKETANNENEEQNSGTKRRGPRTTIKAKQLETLKAAFAATPKPTRHIREQLAQETGLNMRVIQVWFQNRRSKERRMKQLSALGARRHAFFRSPRRMRPLGGRLDESEMLGSTPYTYYGDYQGDYYAPGSNYDFFAHGPPSQAQSPADSSFLAASGPGSTPLGALEPPLAGPHAADNPRFTDMISHPDTPSPEPGLPGTLHPMPGEVFSGGPSPPFPMSGTSGYSGPLSHPNPELNEAAVW.

LIM zinc-binding domains lie at 3–61 (VHCA…RRFG) and 62–125 (TKCA…SSSL). The segment covering 124–135 (SLKEGSLNSVSS) has biased composition (low complexity). Disordered regions lie at residues 124–186 (SLKE…PRTT) and 298–402 (HGPP…AAVW). Residues 151-167 (DDPKETDNSTSSDKETA) show a composition bias toward basic and acidic residues. The segment at residues 180–239 (RRGPRTTIKAKQLETLKAAFAATPKPTRHIREQLAQETGLNMRVIQVWFQNRRSKERRMK) is a DNA-binding region (homeobox). 2 stretches are compositionally biased toward low complexity: residues 300 to 311 (PPSQAQSPADSS) and 322 to 336 (PLGA…PHAA).

Expressed in fetal brain and in various regions of the adult central nervous system including the spinal cord, the thalamus, and the cerebellum.

It localises to the nucleus. Plays an essential role in the regulation of neuronal differentiation and migration during development of the central nervous system. The polypeptide is LIM/homeobox protein Lhx5 (LHX5) (Homo sapiens (Human)).